Reading from the N-terminus, the 233-residue chain is Nuclear speckle RNA-binding protein A (233 aa).

Disordered regions lie at residues 1–54, 68–92, and 214–233; these read MADG…VPDT, VQSG…GGNV, and FLRL…RGRR. A compositionally biased stretch (gly residues) spans 71–91; the sequence is GEGGSVSMGRSGGGGGGGGGN. One can recognise an RRM domain in the interval 136 to 222; that stretch reads NTLYVEGLPS…KFLRLQFSRK (87 aa).

As to expression, expressed in root meristems, lateral root primordia and root vascular tissues.

The protein localises to the nucleus speckle. In terms of biological role, alternative splicing (AS) regulator that binds to specific mRNAs and modulates auxin effects on the transcriptome. Displaced from its targets upon binding to AS competitor long non-coding RNA (ASCO-RNA). This chain is Nuclear speckle RNA-binding protein A, found in Arabidopsis thaliana (Mouse-ear cress).